We begin with the raw amino-acid sequence, 435 residues long: Origin recognition complex subunit 5 (435 aa).

37-44 (GHTASGKT) is an ATP binding site.

It belongs to the ORC5 family. In terms of assembly, component of ORC, a complex composed of at least 6 subunits: ORC1, ORC2, ORC3, ORC4, ORC5 and ORC6. ORC is regulated in a cell-cycle dependent manner. It is sequentially assembled at the exit from anaphase of mitosis and disassembled as cells enter S phase. Multi-mono-ubiquitinated by OBI1; ubiquitination is important for efficient DNA replication origin site activation. Ubiquitination levels are low in mitotic and early G1-phAse cells and are induced in late G1-/early S-phase, peaking in S-phase and decrease toward the end of the cell cycle. In terms of tissue distribution, abundant in spleen, ovary, prostate, testis, and colon mucosa.

The protein resides in the nucleus. The protein localises to the chromosome. Its function is as follows. Component of the origin recognition complex (ORC) that binds origins of replication. DNA-binding is ATP-dependent. The specific DNA sequences that define origins of replication have not been identified yet. ORC is required to assemble the pre-replication complex necessary to initiate DNA replication. The sequence is that of Origin recognition complex subunit 5 (ORC5) from Homo sapiens (Human).